Here is a 132-residue protein sequence, read N- to C-terminus: Cytochrome c-554 (132 aa).

Residues 1 to 24 form the signal peptide; the sequence is MKSISMLTLAASVAFAVTAGQAVA. Residues 26 to 126 enclose the Cytochrome c domain; sequence GDPAAGEKVF…NVWAYLSQFG (101 aa). The heme c site is built by cysteine 38, cysteine 41, histidine 42, and methionine 104.

In terms of processing, binds 1 heme c group covalently per subunit.

The protein resides in the periplasm. In Methylosinus trichosporium, this protein is Cytochrome c-554.